The following is a 256-amino-acid chain: Non-structural protein ORF4b (256 aa).

The protein localises to the host nucleus. It localises to the host nucleolus. It is found in the host cytoplasm. Plays a role in the inhibition of host innate immunity by inhibiting the interaction between host IKBKE and MAVS. In turn, this inhibition prevents the production of host interferon beta. Additionally, may also interfere with host antiviral response within the nucleus. The chain is Non-structural protein ORF4b (ORF4b) from Bat coronavirus HKU5 (BtCoV).